A 723-amino-acid polypeptide reads, in one-letter code: Epidermal growth factor receptor kinase substrate 8-like protein 1 (723 aa).

Positions 35 to 164 (QYPVNHLVTF…LHNYRSGRGE (130 aa)) constitute a PTB domain. A compositionally biased stretch (basic and acidic residues) spans 162–183 (RGERRAAALRATQEELQRDRSP). Disordered regions lie at residues 162–247 (RGER…PRGP), 442–477 (KQLQ…LESE), 537–589 (GPRL…GLDP), and 609–636 (LAQG…GSDA). Ser-182 carries the phosphoserine modification. At Thr-187 the chain carries Phosphothreonine. Residues 478–537 (TAGKWVLCNYDFQARNSSELSVKQRDVLEVLDDSRKWWKVRDPAGQEGYVPYNILTPYPG) form the SH3 domain. Over residues 543-552 (SQSPARSLNS) the composition is skewed to polar residues. Residues 553–568 (TPPPPPAPAPAPPPAL) show a composition bias toward pro residues. Residues 571-580 (PRWDRPRWDS) are compositionally biased toward basic and acidic residues. Residues 689–719 (VQRSLLEDKEKVSELEAVMEKQKKKVEGEVE) are a coiled coil.

It belongs to the EPS8 family. As to quaternary structure, interacts with ABI1. Part of a complex that contains SOS1, ABI1 and EPS8L2. Associates with F-actin. In terms of tissue distribution, detected in placenta.

It localises to the cytoplasm. Its function is as follows. Stimulates guanine exchange activity of SOS1. May play a role in membrane ruffling and remodeling of the actin cytoskeleton. The chain is Epidermal growth factor receptor kinase substrate 8-like protein 1 (EPS8L1) from Homo sapiens (Human).